The primary structure comprises 124 residues: Replication restart protein PriB (124 aa).

Residues 12-112 enclose the SSB domain; that stretch reads IDNCLTLTGI…LHTEQIEFID (101 aa).

The protein belongs to the PriB family. In terms of assembly, homodimer. Interacts with PriA and DnaT. Component of the replication restart primosome. Primosome assembly occurs via a 'hand-off' mechanism. PriA binds to replication forks, subsequently PriB then DnaT bind; DnaT then displaces ssDNA to generate the helicase loading substrate.

In terms of biological role, involved in the restart of stalled replication forks, which reloads the replicative helicase on sites other than the origin of replication; the PriA-PriB pathway is the major replication restart pathway. During primosome assembly it facilitates complex formation between PriA and DnaT on DNA; stabilizes PriA on DNA. Stimulates the DNA unwinding activity of PriA helicase. In Haemophilus ducreyi (strain 35000HP / ATCC 700724), this protein is Replication restart protein PriB.